The following is a 129-amino-acid chain: D-ribose pyranase (129 aa).

Residue H20 is the Proton donor of the active site. Substrate is bound by residues D28, H96, and 118 to 120; that span reads YAN.

The protein belongs to the RbsD / FucU family. RbsD subfamily. As to quaternary structure, homodecamer.

It is found in the cytoplasm. It catalyses the reaction beta-D-ribopyranose = beta-D-ribofuranose. It participates in carbohydrate metabolism; D-ribose degradation; D-ribose 5-phosphate from beta-D-ribopyranose: step 1/2. Catalyzes the interconversion of beta-pyran and beta-furan forms of D-ribose. The polypeptide is D-ribose pyranase (Exiguobacterium sibiricum (strain DSM 17290 / CCUG 55495 / CIP 109462 / JCM 13490 / 255-15)).